We begin with the raw amino-acid sequence, 117 residues long: DNA-directed RNA polymerase subunit omega (117 aa).

It belongs to the RNA polymerase subunit omega family. In terms of assembly, the RNAP catalytic core consists of 2 alpha, 1 beta, 1 beta' and 1 omega subunit. When a sigma factor is associated with the core the holoenzyme is formed, which can initiate transcription.

The enzyme catalyses RNA(n) + a ribonucleoside 5'-triphosphate = RNA(n+1) + diphosphate. Its function is as follows. Promotes RNA polymerase assembly. Latches the N- and C-terminal regions of the beta' subunit thereby facilitating its interaction with the beta and alpha subunits. This Cereibacter sphaeroides (strain ATCC 17025 / ATH 2.4.3) (Rhodobacter sphaeroides) protein is DNA-directed RNA polymerase subunit omega.